Consider the following 581-residue polypeptide: Coiled-coil domain-containing protein 102A (581 aa).

Disordered regions lie at residues 1 to 61, 156 to 219, 496 to 517, and 534 to 581; these read MNHT…GLGC, QRVR…IGTD, QAED…SLDE, and SRLR…LQIP. The segment covering 39-59 has biased composition (low complexity); it reads TPSPSGGTPSSSPPLLLSPGL. A coiled-coil region spans residues 70-164; sequence REELRLRELE…AQRVRAEQSS (95 aa). The segment covering 161–184 has biased composition (polar residues); the sequence is EQSSPENASTAPESISSTASTHSN. Residues 185–202 show a composition bias toward basic and acidic residues; the sequence is QPREAEIKQDNQDEEGVR. Positions 270 to 541 form a coiled coil; sequence AALEEDTSKL…LQSRLRRQQN (272 aa). The span at 559–581 shows a compositional bias: acidic residues; that stretch reads EDADGPPSDPDEDEEEELQLQIP.

In Danio rerio (Zebrafish), this protein is Coiled-coil domain-containing protein 102A (ccdc102a).